We begin with the raw amino-acid sequence, 371 residues long: GPI mannosyltransferase 1 (371 aa).

Transmembrane regions (helical) follow at residues 64 to 84, 120 to 140, 144 to 164, 190 to 210, 248 to 268, 290 to 310, 318 to 338, and 344 to 364; these read FPSW…WLMI, AILG…SVWL, ILGF…AFLV, IVVG…YLYG, ASSL…PLVF, VCTS…LPNS, LICL…AYNL, and SVFI…VYEL.

The protein belongs to the PIGM family.

The protein resides in the endoplasmic reticulum membrane. The protein operates within glycolipid biosynthesis; glycosylphosphatidylinositol-anchor biosynthesis. Mannosyltransferase involved in glycosylphosphatidylinositol-anchor biosynthesis. Transfers the first alpha-1,4-mannose to GlcN-acyl-PI during GPI precursor assembly. Required for cell wall integrity. The polypeptide is GPI mannosyltransferase 1 (gpi14) (Schizosaccharomyces pombe (strain 972 / ATCC 24843) (Fission yeast)).